An 813-amino-acid chain; its full sequence is Leucine--tRNA ligase (813 aa).

The 'HIGH' region motif lies at 42-52 (PYTSGNLHIGH). The short motif at 580 to 584 (KMSKS) is the 'KMSKS' region element. Position 583 (lysine 583) interacts with ATP.

Belongs to the class-I aminoacyl-tRNA synthetase family.

Its subcellular location is the cytoplasm. The enzyme catalyses tRNA(Leu) + L-leucine + ATP = L-leucyl-tRNA(Leu) + AMP + diphosphate. The sequence is that of Leucine--tRNA ligase from Dehalococcoides mccartyi (strain ATCC BAA-2266 / KCTC 15142 / 195) (Dehalococcoides ethenogenes (strain 195)).